The chain runs to 146 residues: Transcriptional regulator AdcR (146 aa).

Residues 1–143 form the HTH marR-type domain; it reads MRQLAKDINA…IQRFLTALVG (143 aa). Zn(2+)-binding residues include E24, C30, E41, and H42. A DNA-binding region (H-T-H motif) is located at residues 54-77; the sequence is NSELARRLNVSQAAVTKAIKSLVK. Zn(2+) contacts are provided by E107, H108, and H112.

Homodimer.

With respect to regulation, zinc acts as a coregulator and is required for DNA-binding activity. Zinc-responsive regulator that acts both as a repressor and as an activator by regulating directly the promoters of its target genes. In the presence of zinc, directly represses the expression of the adcRCBA operon, of genes coding for a group of surface antigen zinc-binding pneumococcal histidine triad proteins (PhtA, PhtB, PhtD and PhtE), and of adcAII. Can also activate expression of adh. The protein is Transcriptional regulator AdcR (adcR) of Streptococcus pneumoniae serotype 2 (strain D39 / NCTC 7466).